The primary structure comprises 199 residues: V-type ATP synthase subunit E (199 aa).

The protein belongs to the V-ATPase E subunit family.

In terms of biological role, produces ATP from ADP in the presence of a proton gradient across the membrane. This chain is V-type ATP synthase subunit E, found in Borreliella afzelii (strain PKo) (Borrelia afzelii).